A 117-amino-acid polypeptide reads, in one-letter code: MDKKQTRLRRARKTRARIAELKMVRLSVHRTNSHIYAQIIDETGNKVLASASSLEADVRSAMANGGNVAAAAVIGKRIAEKAKAAGIEQVAFDRSGFKYHGRMKALADAAREHGLVF.

Belongs to the universal ribosomal protein uL18 family. In terms of assembly, part of the 50S ribosomal subunit; part of the 5S rRNA/L5/L18/L25 subcomplex. Contacts the 5S and 23S rRNAs.

Functionally, this is one of the proteins that bind and probably mediate the attachment of the 5S RNA into the large ribosomal subunit, where it forms part of the central protuberance. The sequence is that of Large ribosomal subunit protein uL18 from Chromobacterium violaceum (strain ATCC 12472 / DSM 30191 / JCM 1249 / CCUG 213 / NBRC 12614 / NCIMB 9131 / NCTC 9757 / MK).